Reading from the N-terminus, the 107-residue chain is Sperm-specific class P protein 31 (107 aa).

One can recognise an MSP domain in the interval 1-107 (MINIDPPSGD…GEVVVKMVAS (107 aa)).

Expressed at higher level in testis.

This is Sperm-specific class P protein 31 (ssp-31) from Caenorhabditis elegans.